A 258-amino-acid chain; its full sequence is Kallikrein-1 (258 aa).

Residues 1–18 (MWFLVLCLALSLGGTGAA) form the signal peptide. A propeptide spans 19 to 24 (PPIQSR) (activation peptide). Positions 25–255 (IVGGWECSQP…YVKWIEDTIA (231 aa)) constitute a Peptidase S1 domain. 5 cysteine pairs are disulfide-bonded: Cys31–Cys170, Cys47–Cys63, Cys149–Cys216, Cys181–Cys195, and Cys206–Cys231. The active-site Charge relay system is the His62. A glycan (O-linked (GalNAc...) serine) is linked at Ser90. A glycan (N-linked (GlcNAc...) asparagine) is linked at Asn99. Ser101 carries O-linked (GalNAc...) serine glycosylation. Asn105 carries an N-linked (GlcNAc...) asparagine glycan. Asp117 serves as the catalytic Charge relay system. Asn161 is a glycosylation site (N-linked (GlcNAc...) asparagine). An O-linked (GalNAc...) serine glycan is attached at Ser163. The active-site Charge relay system is Ser210.

This sequence belongs to the peptidase S1 family. Kallikrein subfamily.

It carries out the reaction Preferential cleavage of Arg-|-Xaa bonds in small molecule substrates. Highly selective action to release kallidin (lysyl-bradykinin) from kininogen involves hydrolysis of Met-|-Xaa or Leu-|-Xaa.. Functionally, glandular kallikreins cleave Met-Lys and Arg-Ser bonds in kininogen to release Lys-bradykinin. The protein is Kallikrein-1 (KLK1) of Papio hamadryas (Hamadryas baboon).